Reading from the N-terminus, the 349-residue chain is Transcription elongation factor A protein 3 (349 aa).

The region spanning 5–82 is the TFIIS N-terminal domain; that stretch reads EELLRIAKKL…RNWKQLLDSP (78 aa). The interval 80–170 is disordered; that stretch reads DSPATPKGEK…RTPSSPSSPT (91 aa). A compositionally biased stretch (basic and acidic residues) spans 101 to 110; the sequence is KGLDCSDWKP. S115 carries the phosphoserine modification. Basic and acidic residues predominate over residues 121 to 133; sequence RVEEPKDRRDSVD. 2 stretches are compositionally biased toward low complexity: residues 134–144 and 160–170; these read SKSSATSSPKR and PRTPSSPSSPT. S141 bears the Phosphoserine mark. In terms of domain architecture, TFIIS central spans 188–304; it reads VRDKCVEMLS…EHQMAKTGGT (117 aa). A TFIIS-type zinc finger spans residues 307 to 347; it reads DLFQCSKCKKKNCTYNQVQTRSADEPMTTFVLCNECGNRWK. Zn(2+) contacts are provided by C311, C314, C339, and C342.

The protein belongs to the TFS-II family.

The protein resides in the nucleus. Functionally, necessary for efficient RNA polymerase II transcription elongation past template-encoded arresting sites. The arresting sites in DNA have the property of trapping a certain fraction of elongating RNA polymerases that pass through, resulting in locked ternary complexes. Cleavage of the nascent transcript by S-II allows the resumption of elongation from the new 3'-terminus. This chain is Transcription elongation factor A protein 3 (TCEA3), found in Bos taurus (Bovine).